The primary structure comprises 912 residues: Vomeronasal type-2 receptor 1 (912 aa).

The first 21 residues, 1 to 21, serve as a signal peptide directing secretion; the sequence is MASRQISLALGFLAFLWAVLG. Residues 22 to 623 lie on the Extracellular side of the membrane; sequence AQNKTEEVQC…LAYGEALGFT (602 aa). 4 N-linked (GlcNAc...) asparagine glycosylation sites follow: N24, N38, N299, and N386. A helical transmembrane segment spans residues 624–644; it reads LVILSIFGALVVLAVTVVYVI. The Cytoplasmic portion of the chain corresponds to 645–657; sequence HRHTPLVKANDRE. The chain crosses the membrane as a helical span at residues 658–678; the sequence is LSFLIQMSLVITVLSSLLFIG. Residues 679–691 lie on the Extracellular side of the membrane; it reads KPCNWSCMARQIT. The chain crosses the membrane as a helical span at residues 692–712; sequence LALGFCLCLSSILGKTISLFF. Topologically, residues 713–732 are cytoplasmic; that stretch reads AYRISVSKTRLISMHPIFRK. Residues 733 to 753 form a helical membrane-spanning segment; that stretch reads LIVLVCVVGEIGVCAAYLVLE. Residues 754–778 are Extracellular-facing; it reads PPRMFKNIEIQNVKIIFECNEGSVE. A helical membrane pass occupies residues 779 to 799; the sequence is FLCSIFGFDVLRALLCFLTTF. At 800-812 the chain is on the cytoplasmic side; that stretch reads VARQLPDNYYEGK. Residues 813–833 traverse the membrane as a helical segment; sequence CITFGMLVFFIVWISFVPAYL. Over 834 to 840 the chain is Extracellular; sequence STKGKFK. The helical transmembrane segment at 841 to 861 threads the bilayer; it reads VAVEIFAILASSYGLLGCLFL. The Cytoplasmic segment spans residues 862-912; sequence PKCFIILLRPKRNTDETVGGRVPTVDRSIQLTSASVSSELNSTTVSTVLDE.

Belongs to the G-protein coupled receptor 3 family. As to expression, expressed at the sensory surface of the vomeronasal organ.

The protein localises to the cell membrane. Its function is as follows. Putative pheromone receptor. The chain is Vomeronasal type-2 receptor 1 (Vmn2r1) from Mus musculus (Mouse).